A 528-amino-acid polypeptide reads, in one-letter code: Protein WHAT'S THIS FACTOR 1 homolog, chloroplastic (528 aa).

A chloroplast-targeting transit peptide spans 1 to 73; the sequence is MEPKLLLSAH…KTRVVVEPVR (73 aa). In terms of domain architecture, PORR spans 80 to 408; that stretch reads KELTFDSVVQ…VKEKMRALVS (329 aa). A disordered region spans residues 410–528; that stretch reads PRFPRRGGPR…FPDGTPREKW (119 aa). The segment covering 418-428 has biased composition (basic and acidic residues); that stretch reads PRKDEEGREVE. Residues 429–491 show a composition bias toward acidic residues; that stretch reads IDGSDADGEE…DDDDEDEEED (63 aa).

The protein resides in the plastid. It localises to the chloroplast. Functionally, RNA-binding protein involved in group II intron splicing. Binds specific group II introns and promotes their splicing. Functions in the context of a heterodimer with the ribonuclease III domain-containing protein RNC1. In Arabidopsis thaliana (Mouse-ear cress), this protein is Protein WHAT'S THIS FACTOR 1 homolog, chloroplastic.